Consider the following 68-residue polypeptide: Small integral membrane protein 10-like protein 1 (68 aa).

Residues 1–21 (MAPAAAPSSLAVRASSPAATP) form a disordered region.

The polypeptide is Small integral membrane protein 10-like protein 1 (Homo sapiens (Human)).